The sequence spans 44 residues: Large ribosomal subunit protein bL34 (44 aa).

Belongs to the bacterial ribosomal protein bL34 family.

In Ehrlichia ruminantium (strain Gardel), this protein is Large ribosomal subunit protein bL34.